The sequence spans 142 residues: Transcriptional regulator MraZ (142 aa).

2 consecutive SpoVT-AbrB domains span residues 5 to 51 (ASAL…PRPE) and 77 to 120 (AMDV…DAQT).

This sequence belongs to the MraZ family. In terms of assembly, forms oligomers.

The protein localises to the cytoplasm. Its subcellular location is the nucleoid. The sequence is that of Transcriptional regulator MraZ from Burkholderia mallei (strain NCTC 10247).